The sequence spans 119 residues: Large ribosomal subunit protein bL20 (119 aa).

This sequence belongs to the bacterial ribosomal protein bL20 family.

In terms of biological role, binds directly to 23S ribosomal RNA and is necessary for the in vitro assembly process of the 50S ribosomal subunit. It is not involved in the protein synthesizing functions of that subunit. The chain is Large ribosomal subunit protein bL20 from Rhodopseudomonas palustris (strain BisB18).